Consider the following 301-residue polypeptide: MTNTQFYITNFLNHIKLQKGDSSHTLRAYKNDLEEFFNFAKVEPEKVEPIVIRGFISEQILKGKSKTTVARKLSTLRSFFSYLYSEGFIKINPARVVSSVKIKRALPKFLTVDDAFKLVEAPSEDKFTVQRDKAILELFYSSGIRVSELCGLNLEDLDLKEGLIKVRGKGKKERIVPVGQKAKEALKKYLAIRQILRIKKKLSLDETPLFINNRGQRISDRQVRRIVEKYAKFIGVLEKIGPHTLRHTFASHLLMEGADLRVIQELLGHASLSTTQIYTHVDLKHLIEVYDKSHPLSKEDE.

Residues 2–84 (TNTQFYITNF…TLRSFFSYLY (83 aa)) form the Core-binding (CB) domain. The 187-residue stretch at 105–291 (ALPKFLTVDD…DLKHLIEVYD (187 aa)) folds into the Tyr recombinase domain. Residues Arg145, Lys169, His243, Arg246, and His269 contribute to the active site. Tyr278 functions as the O-(3'-phospho-DNA)-tyrosine intermediate in the catalytic mechanism.

It belongs to the 'phage' integrase family. XerC subfamily. Forms a cyclic heterotetrameric complex composed of two molecules of XerC and two molecules of XerD.

The protein resides in the cytoplasm. Site-specific tyrosine recombinase, which acts by catalyzing the cutting and rejoining of the recombining DNA molecules. The XerC-XerD complex is essential to convert dimers of the bacterial chromosome into monomers to permit their segregation at cell division. It also contributes to the segregational stability of plasmids. In Thermodesulfovibrio yellowstonii (strain ATCC 51303 / DSM 11347 / YP87), this protein is Tyrosine recombinase XerC.